A 100-amino-acid chain; its full sequence is Vesicle-associated membrane protein 3 (100 aa).

An N-acetylserine modification is found at Ser2. At 2–77 the chain is on the cytoplasmic side; that stretch reads STGPTAATGS…KRKYWWKNCK (76 aa). The v-SNARE coiled-coil homology domain occupies 14–74; the sequence is RLQQTQNQVD…AKLKRKYWWK (61 aa). Residues Lys66, Lys68, and Lys77 each participate in a glycyl lysine isopeptide (Lys-Gly) (interchain with G-Cter in ubiquitin) cross-link. Residues 78 to 98 traverse the membrane as a helical; Anchor for type IV membrane protein segment; it reads MWAIGITVLVIFIIIIIVWVV. Residues 99–100 lie on the Vesicular side of the membrane; sequence SS.

It belongs to the synaptobrevin family. As to quaternary structure, interacts with POPDC1 (via the C-terminus cytoplasmic tail). Interacts with BCAP31; involved in VAMP3 export from the endoplasmic reticulum. Interacts with BAIAP3; this interaction is increased in the presence of calcium. Interacts with PICALM. Post-translationally, ubiquitinated by RNF167 at Lys-66, Lys-68 and Lys-77, regulating the recycling endosome pathway. In terms of processing, (Microbial infection) Targeted and hydrolyzed by C.botulinum neurotoxin type B (BoNT/B, botB) which hydrolyzes the 59-Gln-|-Phe-60 bond and probably inhibits neurotransmitter release. (Microbial infection) Targeted and hydrolyzed by C.botulinum neurotoxin type D (BoNT/D, botD) which hydrolyzes the 42-Lys-|-Leu-43 bond and probably inhibits neurotransmitter release. Note that humans are not known to be infected by C.botulinum type D. Post-translationally, (Microbial infection) Targeted and hydrolyzed by C.botulinum neurotoxin type F (BoNT/F, botF) which hydrolyzes the 41-Gln-|-Lys-42 bond and probably inhibits neurotransmitter release.

The protein localises to the early endosome membrane. It is found in the recycling endosome membrane. It localises to the synapse. Its subcellular location is the synaptosome. Functionally, SNARE involved in vesicular transport from the late endosomes to the trans-Golgi network. The chain is Vesicle-associated membrane protein 3 (VAMP3) from Homo sapiens (Human).